Consider the following 64-residue polypeptide: Large ribosomal subunit protein uL29 (64 aa).

Belongs to the universal ribosomal protein uL29 family.

This Paraburkholderia phytofirmans (strain DSM 17436 / LMG 22146 / PsJN) (Burkholderia phytofirmans) protein is Large ribosomal subunit protein uL29.